A 499-amino-acid chain; its full sequence is Glutelin type-B 1 (499 aa).

Residues 1–24 (MASSVFSRFSIYFCVLLLCHGSMA) form the signal peptide. Cystine bridges form between Cys-45-Cys-78 and Cys-121-Cys-309. 2 consecutive Cupin type-1 domains span residues 50–247 (LQAF…VAAK) and 315–464 (VNIE…EQAR). The segment at 467–499 (KNNRGEEHGAFTPRFQQQYYPGLSNESESETSE) is disordered.

This sequence belongs to the 11S seed storage protein (globulins) family. Hexamer; each subunit is composed of an acidic and a basic chain derived from a single precursor and linked by a disulfide bond.

Its function is as follows. Seed storage protein. This Oryza sativa subsp. japonica (Rice) protein is Glutelin type-B 1 (GluB1-A).